Here is a 202-residue protein sequence, read N- to C-terminus: Superoxide dismutase [Fe] (202 aa).

Fe cation-binding residues include His27, His82, Asp164, and His168.

It belongs to the iron/manganese superoxide dismutase family. As to quaternary structure, homodimer. It depends on Fe cation as a cofactor.

It catalyses the reaction 2 superoxide + 2 H(+) = H2O2 + O2. Functionally, destroys superoxide anion radicals which are normally produced within the cells and which are toxic to biological systems. In Enterococcus faecalis (strain ATCC 700802 / V583), this protein is Superoxide dismutase [Fe] (sodA).